Consider the following 269-residue polypeptide: MTVLDSILDGVRADVAAREAVLDFAAVKAAAAAAPPALDAAAALLEPGIGVIAEVKRASPSKGALADITDPAELAAAYQAGGARVISVLTEERRFQGSLADLDAVRRAVSIPILRKDFIVGPYQIHEARAHGADVVLLIVAALEQDALASLIDRTESLGMTALVEVHTEEEANRALEAGAKVIGVNARNLKTLEVDKNTFGEIAPGLPTEIIKIAESGVRGTADLLAYAGAGADAVLVGEGLVTSGDPRKAVADLVNAGAHPSCPKPSR.

The protein belongs to the TrpC family.

The catalysed reaction is 1-(2-carboxyphenylamino)-1-deoxy-D-ribulose 5-phosphate + H(+) = (1S,2R)-1-C-(indol-3-yl)glycerol 3-phosphate + CO2 + H2O. It functions in the pathway amino-acid biosynthesis; L-tryptophan biosynthesis; L-tryptophan from chorismate: step 4/5. This chain is Indole-3-glycerol phosphate synthase, found in Rhodococcus jostii (strain RHA1).